The following is a 238-amino-acid chain: ATP synthase subunit a (238 aa).

5 helical membrane passes run 18-38, 75-95, 112-132, 179-199, and 203-223; these read LTIL…VFWA, YSLL…LGLM, NFGV…IEGI, VVTG…PLAF, and IVWT…FIIL.

The protein belongs to the ATPase A chain family. As to quaternary structure, F-type ATPases have 2 components, CF(1) - the catalytic core - and CF(0) - the membrane proton channel. CF(1) has five subunits: alpha(3), beta(3), gamma(1), delta(1), epsilon(1). CF(0) has three main subunits: a(1), b(2) and c(9-12). The alpha and beta chains form an alternating ring which encloses part of the gamma chain. CF(1) is attached to CF(0) by a central stalk formed by the gamma and epsilon chains, while a peripheral stalk is formed by the delta and b chains.

The protein localises to the cell membrane. Its function is as follows. Key component of the proton channel; it plays a direct role in the translocation of protons across the membrane. The sequence is that of ATP synthase subunit a from Streptococcus agalactiae serotype Ia (strain ATCC 27591 / A909 / CDC SS700).